Reading from the N-terminus, the 288-residue chain is Ankyrin repeat and SOCS box protein 8 (288 aa).

Serine 17 bears the Phosphoserine mark. ANK repeat units lie at residues 52–81 (GTLKPLHCACMVSDADCVELLLEKGAEVNA), 85–113 (YNRTVLHYAAEKDEACVEVLLEYGANPNA), 117–146 (NRDTPLHWAAFKNNAECVRALLESGASVNA), and 150–179 (NNDTPLSWAAMKGNLESVSILLDYGAEVRV). The region spanning 235–288 (QLCEKLTVLCSAPGTLKTLARYAVRRSLGLQYLPDAVKGLPLPASLKEYLLLLE) is the SOCS box domain.

It belongs to the ankyrin SOCS box (ASB) family. As to quaternary structure, interacts with TBK1; this interaction promotes TBK1 proteasomal degradation. Phosphorylated by TBK1.

The protein resides in the cytoplasm. The protein operates within protein modification; protein ubiquitination. Functionally, may be a substrate-recognition component of a SCF-like ECS (Elongin-Cullin-SOCS-box protein) E3 ubiquitin-protein ligase complex which mediates the ubiquitination and subsequent proteasomal degradation of target proteins. Inhibits IFN-beta production through the IRF3 signaling pathway by targeting TBK1 via 'Lys-48'-linked ubiquitination, leading to its proteasomal degradation. This chain is Ankyrin repeat and SOCS box protein 8 (ASB8), found in Macaca fascicularis (Crab-eating macaque).